The following is a 180-amino-acid chain: Signal peptidase complex subunit 2 (180 aa).

The Cytoplasmic segment spans residues 1–45 (MSDERITVVNKWDGPTVKNGLDEVVKKILNDKVGWTEQHNLMNLR). Residues 46-66 (LLISFIGVAFSAFACGYDFYA) form a helical membrane-spanning segment. The Lumenal segment spans residues 67–72 (PFPKSK). Residues 73–93 (IVLLVCSVSYFICMGVLQLFQ) traverse the membrane as a helical segment. The Cytoplasmic segment spans residues 94-180 (WYVEKDCFYE…LWARLIRSEQ (87 aa)).

It belongs to the SPCS2 family. In terms of assembly, component of the signal peptidase complex (SPC) composed of a catalytic subunit sec-11 and three accessory subunits spcs-1, spcs-2 and spcs-3. The complex induces a local thinning of the ER membrane which is used to measure the length of the signal peptide (SP) h-region of protein substrates. This ensures the selectivity of the complex towards h-regions shorter than 18-20 amino acids.

It is found in the endoplasmic reticulum membrane. Its function is as follows. Component of the signal peptidase complex (SPC) which catalyzes the cleavage of N-terminal signal sequences from nascent proteins as they are translocated into the lumen of the endoplasmic reticulum. Enhances the enzymatic activity of SPC and facilitates the interactions between different components of the translocation site. The sequence is that of Signal peptidase complex subunit 2 from Caenorhabditis briggsae.